Here is a 732-residue protein sequence, read N- to C-terminus: Elongation factor 2 (732 aa).

The 212-residue stretch at Glu19 to Thr230 folds into the tr-type G domain. GTP is bound by residues Ala28–Thr35, Asp94–His98, and Asn148–Asp151. Diphthamide is present on His597.

This sequence belongs to the TRAFAC class translation factor GTPase superfamily. Classic translation factor GTPase family. EF-G/EF-2 subfamily.

It localises to the cytoplasm. Catalyzes the GTP-dependent ribosomal translocation step during translation elongation. During this step, the ribosome changes from the pre-translocational (PRE) to the post-translocational (POST) state as the newly formed A-site-bound peptidyl-tRNA and P-site-bound deacylated tRNA move to the P and E sites, respectively. Catalyzes the coordinated movement of the two tRNA molecules, the mRNA and conformational changes in the ribosome. The sequence is that of Elongation factor 2 from Thermococcus gammatolerans (strain DSM 15229 / JCM 11827 / EJ3).